Consider the following 447-residue polypeptide: Histidine--tRNA ligase (447 aa).

This sequence belongs to the class-II aminoacyl-tRNA synthetase family. Homodimer.

Its subcellular location is the cytoplasm. It carries out the reaction tRNA(His) + L-histidine + ATP = L-histidyl-tRNA(His) + AMP + diphosphate + H(+). This chain is Histidine--tRNA ligase (hisS), found in Synechocystis sp. (strain ATCC 27184 / PCC 6803 / Kazusa).